A 494-amino-acid chain; its full sequence is Prenylcysteine oxidase 1-like (494 aa).

Positions 1–22 (MARAAPLLAALTALLAAAAAGG) are cleaved as a signal peptide. An N-linked (GlcNAc...) asparagine glycan is attached at Asn342.

This sequence belongs to the prenylcysteine oxidase family. FAD is required as a cofactor.

The protein localises to the secreted. Its function is as follows. Likely to have oxidoreductase activity. Required in the mevalonate pathway to regulate prenylation and enhances the bactericidal activity of neutrophils. The polypeptide is Prenylcysteine oxidase 1-like (PCYOX1L) (Homo sapiens (Human)).